The primary structure comprises 289 residues: Rhodopsin (289 aa).

Over 1–7 (YLVNPAG) the chain is Extracellular. Residues 8-32 (YAALGAYMFLLILIGSPVNFLTLYV) form a helical membrane-spanning segment. Topologically, residues 33 to 44 (TLEHKKLRTPLN) are cytoplasmic. Residues 45 to 67 (YILLNLAVADLFMVLGGFTTTMY) form a helical membrane-spanning segment. Residues 68-81 (TSMHGYSVLGRLGC) are Extracellular-facing. A disulfide bridge connects residues Cys81 and Cys158. A helical transmembrane segment spans residues 82–104 (ILEGFFATLGGEIALWSLVVLAI). The 'Ionic lock' involved in activated form stabilization motif lies at 105–107 (ERW). Topologically, residues 105–123 (ERWIVVCKPISNFRFTEDH) are cytoplasmic. Residues 124–144 (AIMGLAFSWVMALACAVPPLV) form a helical membrane-spanning segment. Residues 145–173 (GWSRYIPEGMQCSCGVDYYTRAEGFNNES) are Extracellular-facing. Asn171 carries an N-linked (GlcNAc...) asparagine glycan. Residues 174–195 (FVIYMFIVHFLIPLSVIFFCYG) form a helical membrane-spanning segment. At 196–223 (RLLCAVKEAAAAQQESETTQRPEKEVTR) the chain is on the cytoplasmic side. The helical transmembrane segment at 224–245 (MVVIMVIAFLVCCLPNASVAWW) threads the bilayer. Over 246-257 (IFCNQGSDFGPI) the chain is Extracellular. Residues 258–279 (FMTLPSFFAKSAAIYNPMIYIC) traverse the membrane as a helical segment. Lys267 bears the N6-(retinylidene)lysine mark. Residues 280–289 (MNKQFRHCMI) lie on the Cytoplasmic side of the membrane.

The protein belongs to the G-protein coupled receptor 1 family. Opsin subfamily. In terms of processing, phosphorylated on some or all of the serine and threonine residues present in the C-terminal region. Post-translationally, contains one covalently linked retinal chromophore.

The protein resides in the membrane. It is found in the cell projection. The protein localises to the cilium. It localises to the photoreceptor outer segment. In terms of biological role, photoreceptor required for image-forming vision at low light intensity. While most salt water fish species use retinal as chromophore, most freshwater fish use 3-dehydroretinal, or a mixture of retinal and 3-dehydroretinal. Light-induced isomerization of 11-cis to all-trans retinal triggers a conformational change that activates signaling via G-proteins. Subsequent receptor phosphorylation mediates displacement of the bound G-protein alpha subunit by arrestin and terminates signaling. This Limnocottus bergianus protein is Rhodopsin (rho).